Reading from the N-terminus, the 157-residue chain is Phosphopantetheine adenylyltransferase (157 aa).

Thr-10 serves as a coordination point for substrate. ATP contacts are provided by residues 10 to 11 (TF) and His-18. The substrate site is built by Lys-42, Leu-74, and Arg-88. ATP is bound by residues 89 to 91 (GLR), Glu-99, and 124 to 130 (NAFISSS).

It belongs to the bacterial CoaD family. Homohexamer. The cofactor is Mg(2+).

Its subcellular location is the cytoplasm. It carries out the reaction (R)-4'-phosphopantetheine + ATP + H(+) = 3'-dephospho-CoA + diphosphate. It participates in cofactor biosynthesis; coenzyme A biosynthesis; CoA from (R)-pantothenate: step 4/5. Its function is as follows. Reversibly transfers an adenylyl group from ATP to 4'-phosphopantetheine, yielding dephospho-CoA (dPCoA) and pyrophosphate. This chain is Phosphopantetheine adenylyltransferase, found in Helicobacter acinonychis (strain Sheeba).